A 98-amino-acid chain; its full sequence is NADH-ubiquinone oxidoreductase chain 4L (98 aa).

3 helical membrane-spanning segments follow: residues 1-21 (MSLTYMNMFMAFTISLLGLLL), 29-49 (SLLCLEGMMLSLFVMMTMTIL), and 61-81 (IILLVFAACEAALGLSLLVMV).

The protein belongs to the complex I subunit 4L family. In terms of assembly, core subunit of respiratory chain NADH dehydrogenase (Complex I) which is composed of 45 different subunits.

It is found in the mitochondrion inner membrane. It catalyses the reaction a ubiquinone + NADH + 5 H(+)(in) = a ubiquinol + NAD(+) + 4 H(+)(out). Its function is as follows. Core subunit of the mitochondrial membrane respiratory chain NADH dehydrogenase (Complex I) which catalyzes electron transfer from NADH through the respiratory chain, using ubiquinone as an electron acceptor. Part of the enzyme membrane arm which is embedded in the lipid bilayer and involved in proton translocation. The sequence is that of NADH-ubiquinone oxidoreductase chain 4L (MT-ND4L) from Vampyrodes caraccioli (Great stripe-faced bat).